Consider the following 429-residue polypeptide: Ribosomal RNA small subunit methyltransferase B (429 aa).

S-adenosyl-L-methionine-binding positions include 254 to 260 (CAAPGGK), Asp277, Asp303, and Asp322. The active-site Nucleophile is Cys375. The segment at 397 to 419 (ALSETGTPDQPGQQNLPGGEEGD) is disordered. A compositionally biased stretch (polar residues) spans 400 to 412 (ETGTPDQPGQQNL).

The protein belongs to the class I-like SAM-binding methyltransferase superfamily. RsmB/NOP family.

It localises to the cytoplasm. The enzyme catalyses cytidine(967) in 16S rRNA + S-adenosyl-L-methionine = 5-methylcytidine(967) in 16S rRNA + S-adenosyl-L-homocysteine + H(+). Its function is as follows. Specifically methylates the cytosine at position 967 (m5C967) of 16S rRNA. The sequence is that of Ribosomal RNA small subunit methyltransferase B from Salmonella paratyphi B (strain ATCC BAA-1250 / SPB7).